The sequence spans 100 residues: Large ribosomal subunit protein uL23 (100 aa).

It belongs to the universal ribosomal protein uL23 family. Part of the 50S ribosomal subunit. Contacts protein L29, and trigger factor when it is bound to the ribosome.

In terms of biological role, one of the early assembly proteins it binds 23S rRNA. One of the proteins that surrounds the polypeptide exit tunnel on the outside of the ribosome. Forms the main docking site for trigger factor binding to the ribosome. The chain is Large ribosomal subunit protein uL23 from Escherichia coli O157:H7.